We begin with the raw amino-acid sequence, 508 residues long: Photosystem II CP47 reaction center protein (508 aa).

6 helical membrane passes run 21 to 36 (SVHI…WAGS), 101 to 115 (IVFS…IWHW), 140 to 156 (GIHL…FGAF), 203 to 218 (IAAG…FHLS), 237 to 252 (VLSS…AFVV), and 457 to 472 (SFAL…HGAR).

The protein belongs to the PsbB/PsbC family. PsbB subfamily. In terms of assembly, PSII is composed of 1 copy each of membrane proteins PsbA, PsbB, PsbC, PsbD, PsbE, PsbF, PsbH, PsbI, PsbJ, PsbK, PsbL, PsbM, PsbT, PsbX, PsbY, PsbZ, Psb30/Ycf12, at least 3 peripheral proteins of the oxygen-evolving complex and a large number of cofactors. It forms dimeric complexes. Requires Binds multiple chlorophylls. PSII binds additional chlorophylls, carotenoids and specific lipids. as cofactor.

The protein resides in the plastid. Its subcellular location is the chloroplast thylakoid membrane. One of the components of the core complex of photosystem II (PSII). It binds chlorophyll and helps catalyze the primary light-induced photochemical processes of PSII. PSII is a light-driven water:plastoquinone oxidoreductase, using light energy to abstract electrons from H(2)O, generating O(2) and a proton gradient subsequently used for ATP formation. The protein is Photosystem II CP47 reaction center protein of Atropa belladonna (Belladonna).